Here is a 226-residue protein sequence, read N- to C-terminus: Lipoprotein signal peptidase (226 aa).

Helical transmembrane passes span 12–32 (KVVA…KIWV), 69–89 (FLSL…AKLV), and 103–123 (SLII…GVIF). Residues Asp-150 and Asp-184 contribute to the active site. The chain crosses the membrane as a helical span at residues 173–193 (FVFFHPVFNFADSCISIGLIL).

This sequence belongs to the peptidase A8 family.

Its subcellular location is the cell inner membrane. It carries out the reaction Release of signal peptides from bacterial membrane prolipoproteins. Hydrolyzes -Xaa-Yaa-Zaa-|-(S,diacylglyceryl)Cys-, in which Xaa is hydrophobic (preferably Leu), and Yaa (Ala or Ser) and Zaa (Gly or Ala) have small, neutral side chains.. Its pathway is protein modification; lipoprotein biosynthesis (signal peptide cleavage). Its function is as follows. This protein specifically catalyzes the removal of signal peptides from prolipoproteins. In Porphyromonas gingivalis (strain ATCC 33277 / DSM 20709 / CIP 103683 / JCM 12257 / NCTC 11834 / 2561), this protein is Lipoprotein signal peptidase.